A 299-amino-acid polypeptide reads, in one-letter code: GTPase Era (299 aa).

The 168-residue stretch at 5 to 172 (KSGFVSIIGR…IDVLKTYLPE (168 aa)) folds into the Era-type G domain. The interval 13–20 (GRPNVGKS) is G1. 13–20 (GRPNVGKS) is a binding site for GTP. The G2 stretch occupies residues 39-43 (QTTRN). A G3 region spans residues 60–63 (DTPG). Residues 60–64 (DTPGI) and 122–125 (NKID) contribute to the GTP site. The segment at 122 to 125 (NKID) is G4. A G5 region spans residues 151-153 (ISA). In terms of domain architecture, KH type-2 spans 203 to 280 (TSEEIPHAIG…YLELWVKVQR (78 aa)).

Belongs to the TRAFAC class TrmE-Era-EngA-EngB-Septin-like GTPase superfamily. Era GTPase family. As to quaternary structure, monomer.

It is found in the cytoplasm. It localises to the cell membrane. Functionally, an essential GTPase that binds both GDP and GTP, with rapid nucleotide exchange. Plays a role in 16S rRNA processing and 30S ribosomal subunit biogenesis and possibly also in cell cycle regulation and energy metabolism. In Staphylococcus aureus (strain Mu3 / ATCC 700698), this protein is GTPase Era.